The chain runs to 430 residues: Gustatory receptor-like 43a (430 aa).

Residues 1–31 (MSTGSHSPEAMWSATNFRRHQRKPNQVLHRW) are Cytoplasmic-facing. Residues 32 to 52 (FFKGSAWIIYAIACGLHFFKL) traverse the membrane as a helical segment. Residues 53 to 79 (HYNERTNQVEESQYHRIWSKIVVVLKV) lie on the Extracellular side of the membrane. The helical transmembrane segment at 80-100 (ILLASPYLQYFVLGLGIYIHI) threads the bilayer. Residues 101 to 110 (TLVQDSKAQN) are Cytoplasmic-facing. The helical transmembrane segment at 111–131 (FLMSLIVLGIVIGVLRRLLIF) threads the bilayer. Topologically, residues 132–168 (LHLKRDRRFLKHTVNEILHITSALEQKFGMEYKCDST) are extracellular. The chain crosses the membrane as a helical span at residues 169 to 189 (LLVVYLAKLWILTVMLDSLWY). Residues 190-277 (KPYFLSSIFL…RDNVSWLSTS (88 aa)) lie on the Cytoplasmic side of the membrane. The helical transmembrane segment at 278–298 (VYLMIFTCIFNAELLIECSLF) threads the bilayer. Residues 299–306 (AGDELENK) are Extracellular-facing. Residues 307–327 (IYIITDGCLGPVCVPILYVLI) form a helical membrane-spanning segment. The Cytoplasmic segment spans residues 328 to 396 (LGMCTDRFRD…IILDITCDRE (69 aa)). Residues 397 to 417 (FVMDYIVTVILTALSLVQYTI) traverse the membrane as a helical segment. The Extracellular portion of the chain corresponds to 418 to 430 (STGGNISECVTHK). N-linked (GlcNAc...) asparagine glycosylation occurs at N422.

The protein localises to the cell membrane. This chain is Gustatory receptor-like 43a, found in Drosophila melanogaster (Fruit fly).